Consider the following 363-residue polypeptide: Small ribosomal subunit biogenesis GTPase RsgA (363 aa).

The region spanning 112 to 268 (HQQVIAANID…LIDTPGMREL (157 aa)) is the CP-type G domain. Residues 157–160 (TKAD) and 210–218 (GSSGAGKST) each bind GTP. Zn(2+) contacts are provided by Cys-291, Cys-296, His-298, and Cys-304. The tract at residues 340-363 (RVAQNNRGKGSGKRPASVDRPGRH) is disordered.

It belongs to the TRAFAC class YlqF/YawG GTPase family. RsgA subfamily. As to quaternary structure, monomer. Associates with 30S ribosomal subunit, binds 16S rRNA. Zn(2+) serves as cofactor.

It is found in the cytoplasm. Functionally, one of several proteins that assist in the late maturation steps of the functional core of the 30S ribosomal subunit. Helps release RbfA from mature subunits. May play a role in the assembly of ribosomal proteins into the subunit. Circularly permuted GTPase that catalyzes slow GTP hydrolysis, GTPase activity is stimulated by the 30S ribosomal subunit. In Xanthomonas axonopodis pv. citri (strain 306), this protein is Small ribosomal subunit biogenesis GTPase RsgA.